We begin with the raw amino-acid sequence, 263 residues long: Aquaglyceroporin (263 aa).

A disordered region spans residues 1–22 (MDQFVFSGGSEGGGELGGDRER). The next 6 membrane-spanning stretches (helical) occupy residues 41–61 (KYFC…FGLA), 64–84 (GGAQ…ITLF), 113–133 (LCYV…GYGI), 157–177 (VIPT…YGVM), 180–200 (LTVP…GATM), and 222–242 (VAAL…AFLG).

Belongs to the MIP/aquaporin (TC 1.A.8) family. In terms of assembly, multimer.

It is found in the vacuole membrane. The enzyme catalyses H2O(in) = H2O(out). It carries out the reaction glycerol(in) = glycerol(out). It catalyses the reaction urea(in) = urea(out). Its function is as follows. Mediates water and glycerol transport across cell membranes. Permeable to selected sugar alcohols of up to five carbons and urea. Permeable to methylamine/methylammonium. The protein is Aquaglyceroporin of Toxoplasma gondii (strain ATCC 50611 / Me49).